The chain runs to 373 residues: tRNA (guanine(26)-N(2))-dimethyltransferase (373 aa).

One can recognise a Trm1 methyltransferase domain in the interval K2–I365. Residues R35, R66, D86, D113, and A114 each coordinate S-adenosyl-L-methionine.

Belongs to the class I-like SAM-binding methyltransferase superfamily. Trm1 family.

The catalysed reaction is guanosine(26) in tRNA + 2 S-adenosyl-L-methionine = N(2)-dimethylguanosine(26) in tRNA + 2 S-adenosyl-L-homocysteine + 2 H(+). Its function is as follows. Dimethylates a single guanine residue at position 26 of a number of tRNAs using S-adenosyl-L-methionine as donor of the methyl groups. This chain is tRNA (guanine(26)-N(2))-dimethyltransferase, found in Methanococcus maripaludis (strain C5 / ATCC BAA-1333).